Here is a 259-residue protein sequence, read N- to C-terminus: 3-deoxy-manno-octulosonate cytidylyltransferase 1 (259 aa).

It belongs to the KdsB family.

It is found in the cytoplasm. The enzyme catalyses 3-deoxy-alpha-D-manno-oct-2-ulosonate + CTP = CMP-3-deoxy-beta-D-manno-octulosonate + diphosphate. The protein operates within nucleotide-sugar biosynthesis; CMP-3-deoxy-D-manno-octulosonate biosynthesis; CMP-3-deoxy-D-manno-octulosonate from 3-deoxy-D-manno-octulosonate and CTP: step 1/1. It participates in bacterial outer membrane biogenesis; lipopolysaccharide biosynthesis. Functionally, activates KDO (a required 8-carbon sugar) for incorporation into bacterial lipopolysaccharide in Gram-negative bacteria. The chain is 3-deoxy-manno-octulosonate cytidylyltransferase 1 from Hydrogenovibrio crunogenus (strain DSM 25203 / XCL-2) (Thiomicrospira crunogena).